The following is a 471-amino-acid chain: DnaJ protein P58IPK homolog B (471 aa).

The first 24 residues, 1 to 24 (MARWPWRWRVLLPLLLLHSSPVFA), serve as a signal peptide directing secretion. TPR repeat units follow at residues 32-65 (PSTL…DPNH), 66-99 (SEAY…KPGS), 112-146 (AQNA…SPNC), 148-180 (KAKL…DEDN), 181-214 (LDAL…DPEH), 227-260 (LLKK…DPDH), 265-298 (VHLY…DGEL), and 300-332 (DALT…SPQD). An N-linked (GlcNAc...) asparagine glycan is attached at N64. The 67-residue stretch at 353-419 (DWYKILGISK…DKRVRYDRGE (67 aa)) folds into the J domain.

Interacts with BIP1.

The protein localises to the endoplasmic reticulum lumen. May play a role in protein folding in the endoplasmic reticulum. The protein is DnaJ protein P58IPK homolog B of Oryza sativa subsp. japonica (Rice).